A 292-amino-acid chain; its full sequence is [LysW]-aminoadipate kinase (292 aa).

Residues arginine 89 and asparagine 193 each contribute to the substrate site.

This sequence belongs to the acetylglutamate kinase family. LysZ subfamily.

It localises to the cytoplasm. The catalysed reaction is [amino-group carrier protein]-C-terminal-N-(1,4-dicarboxybutan-1-yl)-L-glutamine + ATP = [amino-group carrier protein]-C-terminal-N-(1-carboxy-5-phosphooxy-5-oxopentan-1-yl)-L-glutamine + ADP. The protein operates within amino-acid biosynthesis; L-lysine biosynthesis via AAA pathway; L-lysine from L-alpha-aminoadipate (Thermus route): step 2/5. Functionally, catalyzes the phosphorylation of LysW-gamma-alpha-aminoadipate. The polypeptide is [LysW]-aminoadipate kinase (Deinococcus radiodurans (strain ATCC 13939 / DSM 20539 / JCM 16871 / CCUG 27074 / LMG 4051 / NBRC 15346 / NCIMB 9279 / VKM B-1422 / R1)).